Consider the following 225-residue polypeptide: MKHVLKNDWGLLLAPEFEKEYYRELDVFLKEEYSIHVVYPKIEDIFNALEYTSYENTKVVILGQDPYHGPNQAHGLSFSVQPGVKTPPSLLNMYKELRDEYGYDIPNNGYLVKWAEQGVLLLNTVLTVRQGEANSHKGKGWEHFTDRVIELLNEREKPVIFILWGRHAQAKKKLITNSNHHIIESVHPSPLSARRGFFGSKPYSKVNTILANMGEREIDWEIPNL.

The active-site Proton acceptor is the Asp-65.

It belongs to the uracil-DNA glycosylase (UDG) superfamily. UNG family.

The protein resides in the cytoplasm. The enzyme catalyses Hydrolyzes single-stranded DNA or mismatched double-stranded DNA and polynucleotides, releasing free uracil.. Excises uracil residues from the DNA which can arise as a result of misincorporation of dUMP residues by DNA polymerase or due to deamination of cytosine. In Bacillus thuringiensis subsp. konkukian (strain 97-27), this protein is Uracil-DNA glycosylase.